A 256-amino-acid polypeptide reads, in one-letter code: MLTYPNINPIAFSLGPLKVHWYGLMYLIGFIGAWLLGYWRIKHYKLNWNNDQLSDLIFYSALGVILGGRVGYMLFYDIQEFIHHPWVLFKIWEGGMSFHGGLLGVVIAAWLFCRKYGKTFLEVGDFVAPLVPLGLAAGRLGNFINGELWGRVTDVPWGMIYPHVDDQPRHPSQLYEFGLEGVALFILIWCYASKPRQQGRVCALFLMGYAICRLIAESFRQPDSQLGFVAFGWLTMGQVLSIPMLLIGIWLWWAKR.

Helical transmembrane passes span 19 to 39, 56 to 76, and 91 to 111; these read VHWY…LGYW, LIFY…MLFY, and IWEG…AAWL. A 1,2-diacyl-sn-glycero-3-phospho-(1'-sn-glycerol) is bound at residue Arg139. The chain crosses the membrane as a helical span at residues 231–251; sequence FGWLTMGQVLSIPMLLIGIWL.

Belongs to the Lgt family.

The protein localises to the cell inner membrane. The catalysed reaction is L-cysteinyl-[prolipoprotein] + a 1,2-diacyl-sn-glycero-3-phospho-(1'-sn-glycerol) = an S-1,2-diacyl-sn-glyceryl-L-cysteinyl-[prolipoprotein] + sn-glycerol 1-phosphate + H(+). The protein operates within protein modification; lipoprotein biosynthesis (diacylglyceryl transfer). Catalyzes the transfer of the diacylglyceryl group from phosphatidylglycerol to the sulfhydryl group of the N-terminal cysteine of a prolipoprotein, the first step in the formation of mature lipoproteins. The sequence is that of Phosphatidylglycerol--prolipoprotein diacylglyceryl transferase from Legionella pneumophila (strain Paris).